Reading from the N-terminus, the 143-residue chain is uncharacterized protein (143 aa).

The 55-residue stretch at 24-78 (IRQRREWQNMSQTTLGEAIGVTFQQVQKYEKGVNRVGAGRLQQISKALKVEPSYF) folds into the HTH cro/C1-type domain. The segment at residues 35 to 54 (QTTLGEAIGVTFQQVQKYEK) is a DNA-binding region (H-T-H motif).

This is an uncharacterized protein from Sinorhizobium fredii (strain NBRC 101917 / NGR234).